Consider the following 228-residue polypeptide: Cytochrome c oxidase subunit 2 (228 aa).

Topologically, residues 1–14 (MAYPFQLGFQDATS) are mitochondrial intermembrane. Residues 15-45 (PIMEELLHFHDHTLMIVFLISSLVLYIISLM) form a helical membrane-spanning segment. The Mitochondrial matrix segment spans residues 46 to 59 (LTTKLTHTSTMDAQ). A helical transmembrane segment spans residues 60-87 (EVETIWTILPAIILILIALPSLRILYMM). Residues 88-228 (DEINNPALTV…FEKWSTSMLT (141 aa)) lie on the Mitochondrial intermembrane side of the membrane. Cu cation is bound by residues histidine 161, cysteine 196, glutamate 198, cysteine 200, histidine 204, and methionine 207. Glutamate 198 serves as a coordination point for Mg(2+). The residue at position 218 (tyrosine 218) is a Phosphotyrosine.

The protein belongs to the cytochrome c oxidase subunit 2 family. In terms of assembly, component of the cytochrome c oxidase (complex IV, CIV), a multisubunit enzyme composed of 14 subunits. The complex is composed of a catalytic core of 3 subunits MT-CO1, MT-CO2 and MT-CO3, encoded in the mitochondrial DNA, and 11 supernumerary subunits COX4I, COX5A, COX5B, COX6A, COX6B, COX6C, COX7A, COX7B, COX7C, COX8 and NDUFA4, which are encoded in the nuclear genome. The complex exists as a monomer or a dimer and forms supercomplexes (SCs) in the inner mitochondrial membrane with NADH-ubiquinone oxidoreductase (complex I, CI) and ubiquinol-cytochrome c oxidoreductase (cytochrome b-c1 complex, complex III, CIII), resulting in different assemblies (supercomplex SCI(1)III(2)IV(1) and megacomplex MCI(2)III(2)IV(2)). Found in a complex with TMEM177, COA6, COX18, COX20, SCO1 and SCO2. Interacts with TMEM177 in a COX20-dependent manner. Interacts with COX20. Interacts with COX16. Cu cation serves as cofactor.

It localises to the mitochondrion inner membrane. The catalysed reaction is 4 Fe(II)-[cytochrome c] + O2 + 8 H(+)(in) = 4 Fe(III)-[cytochrome c] + 2 H2O + 4 H(+)(out). Functionally, component of the cytochrome c oxidase, the last enzyme in the mitochondrial electron transport chain which drives oxidative phosphorylation. The respiratory chain contains 3 multisubunit complexes succinate dehydrogenase (complex II, CII), ubiquinol-cytochrome c oxidoreductase (cytochrome b-c1 complex, complex III, CIII) and cytochrome c oxidase (complex IV, CIV), that cooperate to transfer electrons derived from NADH and succinate to molecular oxygen, creating an electrochemical gradient over the inner membrane that drives transmembrane transport and the ATP synthase. Cytochrome c oxidase is the component of the respiratory chain that catalyzes the reduction of oxygen to water. Electrons originating from reduced cytochrome c in the intermembrane space (IMS) are transferred via the dinuclear copper A center (CU(A)) of subunit 2 and heme A of subunit 1 to the active site in subunit 1, a binuclear center (BNC) formed by heme A3 and copper B (CU(B)). The BNC reduces molecular oxygen to 2 water molecules using 4 electrons from cytochrome c in the IMS and 4 protons from the mitochondrial matrix. The sequence is that of Cytochrome c oxidase subunit 2 (MT-CO2) from Sus scrofa (Pig).